We begin with the raw amino-acid sequence, 324 residues long: Acetyl-coenzyme A carboxylase carboxyl transferase subunit alpha (324 aa).

One can recognise a CoA carboxyltransferase C-terminal domain in the interval 42 to 296 (RLSELEEEVY…EKALTRLAEK (255 aa)).

The protein belongs to the AccA family. In terms of assembly, acetyl-CoA carboxylase is a heterohexamer composed of biotin carboxyl carrier protein (AccB), biotin carboxylase (AccC) and two subunits each of ACCase subunit alpha (AccA) and ACCase subunit beta (AccD).

It is found in the cytoplasm. The catalysed reaction is N(6)-carboxybiotinyl-L-lysyl-[protein] + acetyl-CoA = N(6)-biotinyl-L-lysyl-[protein] + malonyl-CoA. Its pathway is lipid metabolism; malonyl-CoA biosynthesis; malonyl-CoA from acetyl-CoA: step 1/1. Component of the acetyl coenzyme A carboxylase (ACC) complex. First, biotin carboxylase catalyzes the carboxylation of biotin on its carrier protein (BCCP) and then the CO(2) group is transferred by the carboxyltransferase to acetyl-CoA to form malonyl-CoA. The polypeptide is Acetyl-coenzyme A carboxylase carboxyl transferase subunit alpha (Shouchella clausii (strain KSM-K16) (Alkalihalobacillus clausii)).